A 283-amino-acid polypeptide reads, in one-letter code: Small ribosomal subunit protein uS3 (283 aa).

Residues 39–107 (VRAYLKTKLK…PVHVNIEEIR (69 aa)) form the KH type-2 domain. Residues 219 to 283 (ASDDDKKRRG…AAVSAEKAGE (65 aa)) form a disordered region. Positions 221–236 (DDDKKRRGPRRDDGKP) are enriched in basic and acidic residues. The segment covering 237–260 (SGRPRAPRPEGQPGAAAPGSAPAA) has biased composition (low complexity).

This sequence belongs to the universal ribosomal protein uS3 family. As to quaternary structure, part of the 30S ribosomal subunit. Forms a tight complex with proteins S10 and S14.

Its function is as follows. Binds the lower part of the 30S subunit head. Binds mRNA in the 70S ribosome, positioning it for translation. The sequence is that of Small ribosomal subunit protein uS3 from Janthinobacterium sp. (strain Marseille) (Minibacterium massiliensis).